Consider the following 216-residue polypeptide: MFTKIFRAVIIGAPGSGKGTISELICKNHGCVHISTGDILRQNIIKNTELGKKAKQYIAEGKLVPDAIVTKTMLARITEVGNRSYILDGFPRNIAQAEALAAREQIDAVITLDVPHSVIIDRVKNRWIHAPSGRVYNIGFKNPKVPGKDDVTGEPLMQREDDKPHVVAKRLELYDEVMSPVIAWYEKKGLVATFKGKQTKEIWPMMELFLNDRINA.

15–20 lines the GTP pocket; that stretch reads GSGKGT. The interval 35–64 is NMPbind; sequence STGDILRQNIIKNTELGKKAKQYIAEGKLV. Residues threonine 36, arginine 41, 62 to 64, 89 to 92, and glutamine 96 contribute to the AMP site; these read KLV and GFPR. The interval 125 to 162 is LID; sequence NRWIHAPSGRVYNIGFKNPKVPGKDDVTGEPLMQREDD. GTP is bound by residues arginine 126 and 135–136; that span reads VY. AMP-binding residues include arginine 159 and arginine 170. Threonine 199 contacts GTP.

The protein belongs to the adenylate kinase family. AK3 subfamily. As to quaternary structure, monomer. Ubiquitously expressed with highest levels expressed in the abdomen, suggesting a function in muscle tissues.

The protein resides in the mitochondrion matrix. The enzyme catalyses a ribonucleoside 5'-triphosphate + AMP = a ribonucleoside 5'-diphosphate + ADP. Its function is as follows. Involved in maintaining the homeostasis of cellular nucleotides by catalyzing the interconversion of nucleoside phosphates. Has GTP:AMP phosphotransferase and ITP:AMP phosphotransferase activities. In Drosophila melanogaster (Fruit fly), this protein is GTP:AMP phosphotransferase, mitochondrial.